Consider the following 205-residue polypeptide: Glycerol-3-phosphate acyltransferase (205 aa).

Residues 1-3 (MSA) are Periplasmic-facing. The helical transmembrane segment at 4–24 (IAPGMILIAYLCGSISSAILV) threads the bilayer. Residues 25–52 (CRLCGLPDPRTSGSGNPGATNVLRIGGK) lie on the Cytoplasmic side of the membrane. A helical transmembrane segment spans residues 53–73 (GAAVAVLIFDVLKGMLPVWGA). At 74–80 (YELGVSP) the chain is on the periplasmic side. A helical membrane pass occupies residues 81–101 (FWLGLIAIAACLGHIWPVFFG). Residues 102–111 (FKGGKGVATA) lie on the Cytoplasmic side of the membrane. The helical transmembrane segment at 112-132 (FGAIAPIGWDLTGVMAGTWLL) threads the bilayer. The Periplasmic portion of the chain corresponds to 133-137 (TVLLS). The helical transmembrane segment at 138-158 (GYSSLGAIVSALIAPFYVWWF) threads the bilayer. The Cytoplasmic segment spans residues 159 to 205 (KPQFTFPVSMLSCLILLRHHDNIQRLWRRQETKIWTKFKRKREKDPE).

Belongs to the PlsY family. As to quaternary structure, probably interacts with PlsX.

Its subcellular location is the cell inner membrane. The enzyme catalyses sn-glycerol 3-phosphate + an acyl-CoA = a 1-acyl-sn-glycero-3-phosphate + CoA. It carries out the reaction a fatty acyl-[ACP] + sn-glycerol 3-phosphate = a 1-acyl-sn-glycero-3-phosphate + holo-[ACP]. The protein operates within lipid metabolism; phospholipid metabolism. Catalyzes the transfer of an acyl group from acyl-ACP to glycerol-3-phosphate (G3P) to form lysophosphatidic acid (LPA). This enzyme can also utilize acyl-CoA as fatty acyl donor, but not acyl-PO(4). In Escherichia coli O8 (strain IAI1), this protein is Glycerol-3-phosphate acyltransferase.